A 407-amino-acid polypeptide reads, in one-letter code: Zinc finger protein 174 (407 aa).

A disordered region spans residues methionine 1–glutamate 20. A Glycyl lysine isopeptide (Lys-Gly) (interchain with G-Cter in SUMO2) cross-link involves residue lysine 26. Residues glycine 59–phenylalanine 124 form the SCAN box domain. Residues glycine 150–glutamine 270 are disordered. A Glycyl lysine isopeptide (Lys-Gly) (interchain with G-Cter in SUMO2) cross-link involves residue lysine 204. Residues proline 211–proline 221 show a composition bias toward basic and acidic residues. Residues lysine 230 and lysine 271 each participate in a glycyl lysine isopeptide (Lys-Gly) (interchain with G-Cter in SUMO2) cross-link. 3 consecutive C2H2-type zinc fingers follow at residues tyrosine 326 to histidine 348, tyrosine 354 to histidine 376, and tyrosine 382 to histidine 405.

It belongs to the krueppel C2H2-type zinc-finger protein family. As to quaternary structure, homodimer. In terms of tissue distribution, expressed in a variety of organs, but most strongly in adult testis and ovary followed by small intestine, colon, prostate, thymus, spleen, pancreas, skeletal muscle, heart, brain and kidney. Also expressed in umbilical vein endothelial cells, foreskin fibroblast and Hep-G2 cells.

The protein localises to the nucleus. Its function is as follows. Transcriptional repressor. The polypeptide is Zinc finger protein 174 (ZNF174) (Homo sapiens (Human)).